The chain runs to 1337 residues: DNA-directed RNA polymerase subunit beta' (1337 aa).

Zn(2+) is bound by residues C60, C62, C75, and C78. Residues D536, D538, and D540 each coordinate Mg(2+). The Zn(2+) site is built by C895, C974, C981, and C984.

The protein belongs to the RNA polymerase beta' chain family. The RNAP catalytic core consists of 2 alpha, 1 beta, 1 beta' and 1 omega subunit. When a sigma factor is associated with the core the holoenzyme is formed, which can initiate transcription. The cofactor is Mg(2+). It depends on Zn(2+) as a cofactor.

It catalyses the reaction RNA(n) + a ribonucleoside 5'-triphosphate = RNA(n+1) + diphosphate. Functionally, DNA-dependent RNA polymerase catalyzes the transcription of DNA into RNA using the four ribonucleoside triphosphates as substrates. The protein is DNA-directed RNA polymerase subunit beta' of Bifidobacterium adolescentis (strain ATCC 15703 / DSM 20083 / NCTC 11814 / E194a).